Here is a 297-residue protein sequence, read N- to C-terminus: Nitrogenase iron protein (297 aa).

11–18 (GKGGIGKS) provides a ligand contact to ATP. C99 serves as a coordination point for [4Fe-4S] cluster. R102 bears the ADP-ribosylarginine; by dinitrogenase reductase ADP-ribosyltransferase mark. C133 contacts [4Fe-4S] cluster.

It belongs to the NifH/BchL/ChlL family. In terms of assembly, homodimer. [4Fe-4S] cluster serves as cofactor. The reversible ADP-ribosylation of Arg-102 inactivates the nitrogenase reductase and regulates nitrogenase activity.

The catalysed reaction is N2 + 8 reduced [2Fe-2S]-[ferredoxin] + 16 ATP + 16 H2O = H2 + 8 oxidized [2Fe-2S]-[ferredoxin] + 2 NH4(+) + 16 ADP + 16 phosphate + 6 H(+). In terms of biological role, the key enzymatic reactions in nitrogen fixation are catalyzed by the nitrogenase complex, which has 2 components: the iron protein and the molybdenum-iron protein. The chain is Nitrogenase iron protein from Mesorhizobium japonicum (strain LMG 29417 / CECT 9101 / MAFF 303099) (Mesorhizobium loti (strain MAFF 303099)).